Here is a 1384-residue protein sequence, read N- to C-terminus: DNA-directed RNA polymerase subunit beta (1384 aa).

It belongs to the RNA polymerase beta chain family. In terms of assembly, the RNAP catalytic core consists of 2 alpha, 1 beta, 1 beta' and 1 omega subunit. When a sigma factor is associated with the core the holoenzyme is formed, which can initiate transcription.

It catalyses the reaction RNA(n) + a ribonucleoside 5'-triphosphate = RNA(n+1) + diphosphate. In terms of biological role, DNA-dependent RNA polymerase catalyzes the transcription of DNA into RNA using the four ribonucleoside triphosphates as substrates. The protein is DNA-directed RNA polymerase subunit beta of Stenotrophomonas maltophilia (strain R551-3).